Here is a 718-residue protein sequence, read N- to C-terminus: Protein Hook homolog 1 (718 aa).

Residues 8–124 (PLLCDSLILW…RLMQLILGCA (117 aa)) enclose the Calponin-homology (CH) domain. 2 coiled-coil regions span residues 164 to 428 (SASD…ELRY) and 473 to 652 (LLLQ…AKLR).

The protein belongs to the hook family. As to quaternary structure, interacts with microtubules.

Its subcellular location is the cytoplasm. It is found in the cytoskeleton. May function to promote vesicle trafficking and/or fusion. In Gallus gallus (Chicken), this protein is Protein Hook homolog 1 (HOOK1).